The following is a 472-amino-acid chain: 2-oxoisovalerate dehydrogenase subunit alpha 2, mitochondrial (472 aa).

185–187 (QYR) is a binding site for thiamine diphosphate. S234, T239, and Q240 together coordinate K(+).

It belongs to the BCKDHA family. As to quaternary structure, heterotetramer of alpha and beta chains. It depends on thiamine diphosphate as a cofactor.

The protein localises to the mitochondrion matrix. The catalysed reaction is N(6)-[(R)-lipoyl]-L-lysyl-[protein] + 3-methyl-2-oxobutanoate + H(+) = N(6)-[(R)-S(8)-2-methylpropanoyldihydrolipoyl]-L-lysyl-[protein] + CO2. Its function is as follows. The branched-chain alpha-keto dehydrogenase complex catalyzes the overall conversion of alpha-keto acids to acyl-CoA and CO(2). It contains multiple copies of three enzymatic components: branched-chain alpha-keto acid decarboxylase (E1), lipoamide acyltransferase (E2) and lipoamide dehydrogenase (E3). This is 2-oxoisovalerate dehydrogenase subunit alpha 2, mitochondrial from Arabidopsis thaliana (Mouse-ear cress).